The chain runs to 316 residues: uncharacterized protein (316 aa).

2 disordered regions span residues 82-105 (AMAA…SGGN) and 238-257 (ASVS…DTQE). Composition is skewed to low complexity over residues 84-96 (AAAS…SSGT) and 239-255 (SVSV…STDT).

The protein belongs to the MG307/MG309/MG338 family.

This is an uncharacterized protein from Mycoplasma pneumoniae (strain ATCC 29342 / M129 / Subtype 1) (Mycoplasmoides pneumoniae).